We begin with the raw amino-acid sequence, 371 residues long: Galanin receptor type 2 (371 aa).

Over 1–27 (MNGSDSQGAEDSSQEGGGGWQPEAVLV) the chain is Extracellular. N2 carries N-linked (GlcNAc...) asparagine glycosylation. Residues 28 to 48 (PLFFALIFLVGAVGNALVLAV) traverse the membrane as a helical segment. At 49–59 (LLRGGQAVSTT) the chain is on the cytoplasmic side. Residues 60–80 (NLFILNLGVADLCFILCCVPF) form a helical membrane-spanning segment. The Extracellular segment spans residues 81-98 (QATIYTLDDWVFGSLLCK). C97 and C174 are disulfide-bonded. A helical transmembrane segment spans residues 99–120 (AVHFLIFLTMHASSFTLAAVSL). Residues 121 to 140 (DRYLAIRYPLHSRELRTPRN) lie on the Cytoplasmic side of the membrane. Residues 141–161 (ALAAIGLIWGLALLFSGPYLS) form a helical membrane-spanning segment. At 162-186 (YYSQSQLANLTVCHPAWSAPRRRAM) the chain is on the extracellular side. Residues 187–207 (DLCTFVFSYLLPVLVLSLTYA) form a helical membrane-spanning segment. The Cytoplasmic segment spans residues 208-236 (RTLHYLWRTVDPVAAGSGSQRAKRKVTRM). Residues 237–257 (IVIVAVLFCLCWMPHHALILC) traverse the membrane as a helical segment. At 258 to 259 (VW) the chain is on the extracellular side. Residues 260-280 (FGRFPLTRATYALRILSHLVS) traverse the membrane as a helical segment. At 281–371 (YANSCVNPIV…TLSRTLDPAC (91 aa)) the chain is on the cytoplasmic side.

This sequence belongs to the G-protein coupled receptor 1 family.

The protein localises to the cell membrane. Its function is as follows. Receptor for the hormone galanin, GALP and spexin-1. The activity of this receptor is mediated by G proteins that activate the phospholipase C/protein kinase C pathway (via G(q)) and that inhibit adenylyl cyclase (via G(i)). In Mus musculus (Mouse), this protein is Galanin receptor type 2 (Galr2).